The sequence spans 61 residues: Large ribosomal subunit protein eL20 (61 aa).

This sequence belongs to the eukaryotic ribosomal protein eL20 family. As to quaternary structure, part of the 50S ribosomal subunit. Binds 23S rRNA.

The polypeptide is Large ribosomal subunit protein eL20 (Methanosarcina acetivorans (strain ATCC 35395 / DSM 2834 / JCM 12185 / C2A)).